The chain runs to 390 residues: Chorismate synthase 1 (390 aa).

Positions 39 and 45 each coordinate NADP(+). FMN is bound by residues 132-134 (RSS), 253-254 (NA), glycine 298, 313-317 (KPIPT), and arginine 339.

This sequence belongs to the chorismate synthase family. As to quaternary structure, homotetramer. FMNH2 serves as cofactor.

It catalyses the reaction 5-O-(1-carboxyvinyl)-3-phosphoshikimate = chorismate + phosphate. It participates in metabolic intermediate biosynthesis; chorismate biosynthesis; chorismate from D-erythrose 4-phosphate and phosphoenolpyruvate: step 7/7. Catalyzes the anti-1,4-elimination of the C-3 phosphate and the C-6 proR hydrogen from 5-enolpyruvylshikimate-3-phosphate (EPSP) to yield chorismate, which is the branch point compound that serves as the starting substrate for the three terminal pathways of aromatic amino acid biosynthesis. This reaction introduces a second double bond into the aromatic ring system. The protein is Chorismate synthase 1 of Bacillus anthracis.